Here is a 225-residue protein sequence, read N- to C-terminus: 3-demethoxyubiquinol 3-hydroxylase (225 aa).

Polar residues predominate over residues 1–11 (MSVASTSSGFT). The interval 1-20 (MSVASTSSGFTPFSRRRGPL) is disordered. Fe cation is bound by residues E74, E104, H107, E156, E188, and H191. The disordered stretch occupies residues 181-203 (VSQMKDDEAQHRASAERAGGVPL). Residues 184-195 (MKDDEAQHRASA) are compositionally biased toward basic and acidic residues.

It belongs to the COQ7 family. Fe cation is required as a cofactor.

It is found in the cell membrane. The enzyme catalyses a 5-methoxy-2-methyl-3-(all-trans-polyprenyl)benzene-1,4-diol + AH2 + O2 = a 3-demethylubiquinol + A + H2O. It functions in the pathway cofactor biosynthesis; ubiquinone biosynthesis. Functionally, catalyzes the hydroxylation of 2-nonaprenyl-3-methyl-6-methoxy-1,4-benzoquinol during ubiquinone biosynthesis. The sequence is that of 3-demethoxyubiquinol 3-hydroxylase from Bordetella petrii (strain ATCC BAA-461 / DSM 12804 / CCUG 43448).